Here is a 169-residue protein sequence, read N- to C-terminus: Ecotin (169 aa).

A signal peptide spans 1–21 (MKKCSIILASVLLATSINAIA). Cysteine 76 and cysteine 113 are disulfide-bonded.

It belongs to the protease inhibitor I11 (ecotin) family. In terms of assembly, homodimer.

The protein localises to the periplasm. General inhibitor of pancreatic serine proteases: inhibits chymotrypsin, trypsin, elastases, factor X, kallikrein as well as a variety of other proteases. In Yersinia pseudotuberculosis serotype O:1b (strain IP 31758), this protein is Ecotin.